The chain runs to 486 residues: dTDP-4-dehydro-6-deoxy-alpha-D-glucopyranose 2,3-dehydratase (486 aa).

DTDP-4-dehydro-6-deoxy-alpha-D-glucose-binding positions include Trp66, 149–153 (TRSNY), Ser187, Trp304, Arg367, 383–385 (QCS), 388–389 (NY), and 421–424 (EGGR).

The protein belongs to the hexose 2,3-dehydratase family. As to quaternary structure, homodimer.

The catalysed reaction is dTDP-4-dehydro-6-deoxy-alpha-D-glucose = dTDP-3,4-didehydro-2,6-dideoxy-alpha-D-glucose + H2O. Functionally, involved in the biosynthesis of forosamine ((4-dimethylamino)-2,3,4,6-tetradeoxy-alpha-D-threo-hexopyranose), a highly deoxygenated sugar component of several bioactive natural products such as the insecticidal spinosyns A and D. Catalyzes the removal of the hydroxyl group at position C-2 of the hexose ring of dTDP-4-dehydro-6-deoxy-alpha-D-glucopyranose, and the oxidation of the hydroxyl group at position C-3 to form a carbonyl functionality. The product of the reaction, dTDP-2,6-dideoxy-D-glycero-hex-2-enos-4-ulose, is a highly unstable diketosugar, which spontaneously forms dTDP-3,4-didehydro-2,6-dideoxy-alpha-D-glucose. The protein is dTDP-4-dehydro-6-deoxy-alpha-D-glucopyranose 2,3-dehydratase of Saccharopolyspora spinosa.